The primary structure comprises 310 residues: UDP-N-acetylenolpyruvoylglucosamine reductase (310 aa).

The 186-residue stretch at 31–216 folds into the FAD-binding PCMH-type domain; it reads KIGGPADYFV…LRKIEELNQA (186 aa). Residue Arg180 is part of the active site. The active-site Proton donor is Ser230. Glu300 is a catalytic residue.

This sequence belongs to the MurB family. FAD serves as cofactor.

The protein localises to the cytoplasm. It carries out the reaction UDP-N-acetyl-alpha-D-muramate + NADP(+) = UDP-N-acetyl-3-O-(1-carboxyvinyl)-alpha-D-glucosamine + NADPH + H(+). Its pathway is cell wall biogenesis; peptidoglycan biosynthesis. In terms of biological role, cell wall formation. This Lachnoclostridium phytofermentans (strain ATCC 700394 / DSM 18823 / ISDg) (Clostridium phytofermentans) protein is UDP-N-acetylenolpyruvoylglucosamine reductase.